Consider the following 267-residue polypeptide: Small ribosomal subunit protein uS3 (267 aa).

The region spanning isoleucine 43–lysine 111 is the KH type-2 domain. Positions phenylalanine 216–glutamate 267 are disordered. Over residues arginine 241–glutamate 267 the composition is skewed to low complexity.

This sequence belongs to the universal ribosomal protein uS3 family. In terms of assembly, part of the 30S ribosomal subunit. Forms a tight complex with proteins S10 and S14.

Binds the lower part of the 30S subunit head. Binds mRNA in the 70S ribosome, positioning it for translation. The protein is Small ribosomal subunit protein uS3 of Bifidobacterium longum subsp. infantis (strain ATCC 15697 / DSM 20088 / JCM 1222 / NCTC 11817 / S12).